A 599-amino-acid polypeptide reads, in one-letter code: Elongation factor 4 (599 aa).

The region spanning 5–187 (SHIRNFSIIA…ALVNGIPAPV (183 aa)) is the tr-type G domain. Residues 17 to 22 (DHGKST) and 134 to 137 (NKMD) each bind GTP.

The protein belongs to the TRAFAC class translation factor GTPase superfamily. Classic translation factor GTPase family. LepA subfamily.

It is found in the cell inner membrane. The catalysed reaction is GTP + H2O = GDP + phosphate + H(+). In terms of biological role, required for accurate and efficient protein synthesis under certain stress conditions. May act as a fidelity factor of the translation reaction, by catalyzing a one-codon backward translocation of tRNAs on improperly translocated ribosomes. Back-translocation proceeds from a post-translocation (POST) complex to a pre-translocation (PRE) complex, thus giving elongation factor G a second chance to translocate the tRNAs correctly. Binds to ribosomes in a GTP-dependent manner. The polypeptide is Elongation factor 4 (Teredinibacter turnerae (strain ATCC 39867 / T7901)).